A 273-amino-acid polypeptide reads, in one-letter code: MNNRVHQGHLARKRFGQNFLNDQFVIDSIVSAINPQKGQAMVEIGPGLAALTEPVGERLDQLTVIELDRDLAARLQTHPFLGPKLTIYQQDAMTFNFGELAEKMGQPLRVFGNLPYNISTPLMFHLFSYTDAIADMHFMLQKEVVNRLVAGPNSKAYGRLSVMAQYYCNVIPVLEVPPSAFTPPPKVDSAVVRLVPHATMPHPVKDVRVLSRITTEAFNQRRKTIRNSLGNLFSVEVLTGMGIDPAMRAENISVAQYCQMANYLAENAPFQES.

The S-adenosyl-L-methionine site is built by Asn18, Leu20, Gly45, Glu66, Asp91, and Asn113.

The protein belongs to the class I-like SAM-binding methyltransferase superfamily. rRNA adenine N(6)-methyltransferase family. RsmA subfamily.

It is found in the cytoplasm. It carries out the reaction adenosine(1518)/adenosine(1519) in 16S rRNA + 4 S-adenosyl-L-methionine = N(6)-dimethyladenosine(1518)/N(6)-dimethyladenosine(1519) in 16S rRNA + 4 S-adenosyl-L-homocysteine + 4 H(+). Specifically dimethylates two adjacent adenosines (A1518 and A1519) in the loop of a conserved hairpin near the 3'-end of 16S rRNA in the 30S particle. May play a critical role in biogenesis of 30S subunits. This chain is Ribosomal RNA small subunit methyltransferase A, found in Escherichia coli O157:H7.